The following is a 343-amino-acid chain: Mitotic checkpoint protein bub-3 (343 aa).

7 WD repeats span residues 21–62 (PPFV…DISE), 67–105 (THGKPLLTCTFAGYNKVAFGGVDHNVKLADIETGNGTQL), 107–146 (SHALAVRCMEFNPMSSLIVSGGWDSSVKLWDARSYGNGAI), 150–187 (NVSSSVYAMDVLKHTILVGTKDRKIFMYDSRKLREPLQ), 192–232 (PLKY…EMMK), 249–288 (ELIHPVHTVAFHPKYGTFATGGADGIVNIWDPFNRKRIIQ), and 291–331 (KFET…NSIT). The interval 322 to 343 (PSPLPNNSITIRHITDPESRPK) is disordered. Basic and acidic residues predominate over residues 334–343 (HITDPESRPK).

It belongs to the WD repeat BUB3 family. As to quaternary structure, may interact with bub-1; for localization at the kinetochore and the onset of anaphase.

The protein resides in the chromosome. Its subcellular location is the centromere. The protein localises to the kinetochore. It localises to the nucleus. Its function is as follows. Has a dual function in spindle-assembly checkpoint signaling and in promoting the establishment of correct kinetochore-microtubule (K-MT) attachments. Promotes the formation of stable end-on bipolar attachments of chromosomes. Necessary for expression and kinetochore localization of bub-1. Plays a role in synapsis checkpoint signaling inducing apoptosis in response to unsynapsed chromosomes and thus controlling chromosomal segregation during oocyte meiosis. The polypeptide is Mitotic checkpoint protein bub-3 (Caenorhabditis elegans).